The following is a 681-amino-acid chain: Potassium-transporting ATPase ATP-binding subunit (681 aa).

The next 4 membrane-spanning stretches (helical) occupy residues 30–50 (LLVY…FFGI), 59–79 (LAIA…EAIA), 216–236 (ILLV…LPFT), and 255–275 (IALL…SIGI). Asp-306 (4-aspartylphosphate intermediate) is an active-site residue. ATP is bound by residues Asp-343, Glu-347, 376–383 (FTATTRMS), and Lys-394. 2 residues coordinate Mg(2+): Asp-517 and Asp-521. The next 3 helical transmembrane spans lie at 587 to 607 (FAII…LNLM), 615 to 635 (AILS…PLSL), and 661 to 681 (LVAP…LGIV).

This sequence belongs to the cation transport ATPase (P-type) (TC 3.A.3) family. Type IA subfamily. In terms of assembly, the system is composed of three essential subunits: KdpA, KdpB and KdpC.

It is found in the cell membrane. It carries out the reaction K(+)(out) + ATP + H2O = K(+)(in) + ADP + phosphate + H(+). In terms of biological role, part of the high-affinity ATP-driven potassium transport (or Kdp) system, which catalyzes the hydrolysis of ATP coupled with the electrogenic transport of potassium into the cytoplasm. This subunit is responsible for energy coupling to the transport system and for the release of the potassium ions to the cytoplasm. This is Potassium-transporting ATPase ATP-binding subunit from Listeria welshimeri serovar 6b (strain ATCC 35897 / DSM 20650 / CCUG 15529 / CIP 8149 / NCTC 11857 / SLCC 5334 / V8).